Here is a 146-residue protein sequence, read N- to C-terminus: Nuclear export protein (146 aa).

Interacts with host HSC70.

The protein localises to the host cytoplasm. Functionally, may mediate the nuclear export of encapsidated genomic RNAs (ribonucleoproteins, RNPs). Interaction of viral NEP with M1-Hsc70 is thought to promote nuclear export of the viral encapsidated genomes. This chain is Nuclear export protein, found in Infectious salmon anemia virus (isolate Atlantic salmon/Norway/810/9/99) (ISAV).